The primary structure comprises 94 residues: Putative toxin RelE4 (94 aa).

The protein belongs to the RelE toxin family.

Its function is as follows. Toxic component of a type II toxin-antitoxin (TA) system. Its cognate antitoxin is RelB4 (Potential). The sequence is that of Putative toxin RelE4 (relE4) from Methanocaldococcus jannaschii (strain ATCC 43067 / DSM 2661 / JAL-1 / JCM 10045 / NBRC 100440) (Methanococcus jannaschii).